The following is a 458-amino-acid chain: Argininosuccinate lyase (458 aa).

Belongs to the lyase 1 family. Argininosuccinate lyase subfamily.

The protein localises to the cytoplasm. It catalyses the reaction 2-(N(omega)-L-arginino)succinate = fumarate + L-arginine. It functions in the pathway amino-acid biosynthesis; L-arginine biosynthesis; L-arginine from L-ornithine and carbamoyl phosphate: step 3/3. In Salmonella dublin (strain CT_02021853), this protein is Argininosuccinate lyase.